We begin with the raw amino-acid sequence, 277 residues long: Hemin import ATP-binding protein HmuV (277 aa).

The ABC transporter domain maps to 19–259 (VEVADLNYSV…AIIEEAFGHR (241 aa)). 51–58 (GRNGAGKS) is an ATP binding site.

It belongs to the ABC transporter superfamily. Heme (hemin) importer (TC 3.A.1.14.5) family. As to quaternary structure, the complex is composed of two ATP-binding proteins (HmuV), two transmembrane proteins (HmuU) and a solute-binding protein (HmuT).

The protein localises to the cell membrane. Its function is as follows. Part of the ABC transporter complex HmuTUV involved in hemin import. Responsible for energy coupling to the transport system. This chain is Hemin import ATP-binding protein HmuV, found in Deinococcus geothermalis (strain DSM 11300 / CIP 105573 / AG-3a).